A 600-amino-acid chain; its full sequence is Probable translation initiation factor IF-2 (600 aa).

Positions 10-227 constitute a tr-type G domain; that stretch reads LRQPIVVVLG…LLAGLTQRYL (218 aa). A G1 region spans residues 19-26; sequence GHVDHGKT. 19 to 26 is a GTP binding site; it reads GHVDHGKT. The segment at 44–48 is G2; sequence EMTQE. Residues 83–86 form a G3 region; sequence DTPG. GTP is bound by residues 83-87 and 137-140; these read DTPGH and NKID. The interval 137-140 is G4; it reads NKID. Positions 205–207 are G5; sequence SAK.

This sequence belongs to the TRAFAC class translation factor GTPase superfamily. Classic translation factor GTPase family. IF-2 subfamily.

Its function is as follows. Function in general translation initiation by promoting the binding of the formylmethionine-tRNA to ribosomes. Seems to function along with eIF-2. The protein is Probable translation initiation factor IF-2 of Saccharolobus solfataricus (strain ATCC 35092 / DSM 1617 / JCM 11322 / P2) (Sulfolobus solfataricus).